We begin with the raw amino-acid sequence, 126 residues long: Fluoride-specific ion channel FluC (126 aa).

4 helical membrane passes run 6-26 (VLLVGAGGFAGSVARYLVALA), 32-52 (TGFPFATFAVNLLGSFLIGFI), 68-90 (LLLTTGFCGGFTTFSTAMYETGG), and 102-122 (LYVAGSLAGGLACLFSGTLLA). Positions 76 and 79 each coordinate Na(+).

Belongs to the fluoride channel Fluc/FEX (TC 1.A.43) family.

The protein resides in the cell inner membrane. It carries out the reaction fluoride(in) = fluoride(out). Its activity is regulated as follows. Na(+) is not transported, but it plays an essential structural role and its presence is essential for fluoride channel function. Functionally, fluoride-specific ion channel. Important for reducing fluoride concentration in the cell, thus reducing its toxicity. This is Fluoride-specific ion channel FluC from Chlorobaculum tepidum (strain ATCC 49652 / DSM 12025 / NBRC 103806 / TLS) (Chlorobium tepidum).